The sequence spans 338 residues: S-adenosylmethionine:tRNA ribosyltransferase-isomerase (338 aa).

Belongs to the QueA family. As to quaternary structure, monomer.

The protein resides in the cytoplasm. It catalyses the reaction 7-aminomethyl-7-carbaguanosine(34) in tRNA + S-adenosyl-L-methionine = epoxyqueuosine(34) in tRNA + adenine + L-methionine + 2 H(+). It functions in the pathway tRNA modification; tRNA-queuosine biosynthesis. Transfers and isomerizes the ribose moiety from AdoMet to the 7-aminomethyl group of 7-deazaguanine (preQ1-tRNA) to give epoxyqueuosine (oQ-tRNA). The chain is S-adenosylmethionine:tRNA ribosyltransferase-isomerase from Carboxydothermus hydrogenoformans (strain ATCC BAA-161 / DSM 6008 / Z-2901).